Consider the following 311-residue polypeptide: Porphobilinogen deaminase (311 aa).

Cysteine 241 carries the S-(dipyrrolylmethanemethyl)cysteine modification.

The protein belongs to the HMBS family. In terms of assembly, monomer. Dipyrromethane is required as a cofactor.

It catalyses the reaction 4 porphobilinogen + H2O = hydroxymethylbilane + 4 NH4(+). Its pathway is porphyrin-containing compound metabolism; protoporphyrin-IX biosynthesis; coproporphyrinogen-III from 5-aminolevulinate: step 2/4. In terms of biological role, tetrapolymerization of the monopyrrole PBG into the hydroxymethylbilane pre-uroporphyrinogen in several discrete steps. The protein is Porphobilinogen deaminase (hemC) of Halalkalibacterium halodurans (strain ATCC BAA-125 / DSM 18197 / FERM 7344 / JCM 9153 / C-125) (Bacillus halodurans).